The chain runs to 1526 residues: Cell wall protein IFF4 (1526 aa).

Positions 1-20 are cleaved as a signal peptide; sequence MKFLQKFIITVALLTNIVFA. 2 N-linked (GlcNAc...) asparagine glycosylation sites follow: asparagine 93 and asparagine 498. The interval 512 to 541 is disordered; the sequence is SSAGGSSFPEETHMLQTSDSDLSSTAGSES. Polar residues predominate over residues 525–541; it reads MLQTSDSDLSSTAGSES. N-linked (GlcNAc...) asparagine glycosylation occurs at asparagine 637. The tract at residues 1180–1207 is disordered; sequence WNGAKSDSPHTSESDITSQYNSHSTSVA. Positions 1193–1207 are enriched in polar residues; it reads SDITSQYNSHSTSVA. Residues asparagine 1451, asparagine 1463, asparagine 1479, asparagine 1502, and asparagine 1506 are each glycosylated (N-linked (GlcNAc...) asparagine). The tract at residues 1455–1483 is disordered; the sequence is SSVSGYPTNRSDSNGYANTPTTGSNTSGD. The GPI-anchor amidated asparagine moiety is linked to residue asparagine 1502. Residues 1503–1526 constitute a propeptide, removed in mature form; it reads GSTNISNKYLKFLGTVVSILILLI.

The protein belongs to the HYR1/IFF family. The GPI-anchor is attached to the protein in the endoplasmic reticulum and serves to target the protein to the cell surface. There, the glucosamine-inositol phospholipid moiety is cleaved off and the GPI-$modified mannoprotein is covalently attached via its lipidless GPI glycan remnant to the 1,6-beta-glucan of the outer cell wall layer.

The protein resides in the secreted. The protein localises to the cell wall. Its subcellular location is the membrane. Functionally, GPI-anchored cell wall protein involved in cell wall organization, hyphal growth, as well as in host-fungal interaction and virulence. Plays a role in adherence to plastic and to host epithelial cells. Promotes the tissue fungal burden during murine vaginal candidiasis. Also increases susceptibility to neutrophil-mediated killing. Furthermore, contributes to the severity of hematogenously disseminated candidiasis in normal mice, but not in neutropenic mice. The polypeptide is Cell wall protein IFF4 (IFF4) (Candida albicans (strain SC5314 / ATCC MYA-2876) (Yeast)).